Consider the following 377-residue polypeptide: Bifunctional enzyme IspD/IspF (377 aa).

Residues 1–221 (MTTAAIIVAA…ERILRQDMDV (221 aa)) form a 2-C-methyl-D-erythritol 4-phosphate cytidylyltransferase region. Positions 222–377 (RLGNGYDVHR…ALATACLVKP (156 aa)) are 2-C-methyl-D-erythritol 2,4-cyclodiphosphate synthase. A divalent metal cation-binding residues include Asp228 and His230. 4-CDP-2-C-methyl-D-erythritol 2-phosphate-binding positions include 228–230 (DVH) and 254–255 (HS). His262 provides a ligand contact to a divalent metal cation. Residues 276-278 (DIG), 352-355 (TTSE), Phe359, and Arg362 contribute to the 4-CDP-2-C-methyl-D-erythritol 2-phosphate site.

In the N-terminal section; belongs to the IspD/TarI cytidylyltransferase family. IspD subfamily. This sequence in the C-terminal section; belongs to the IspF family. The cofactor is a divalent metal cation.

The catalysed reaction is 2-C-methyl-D-erythritol 4-phosphate + CTP + H(+) = 4-CDP-2-C-methyl-D-erythritol + diphosphate. The enzyme catalyses 4-CDP-2-C-methyl-D-erythritol 2-phosphate = 2-C-methyl-D-erythritol 2,4-cyclic diphosphate + CMP. The protein operates within isoprenoid biosynthesis; isopentenyl diphosphate biosynthesis via DXP pathway; isopentenyl diphosphate from 1-deoxy-D-xylulose 5-phosphate: step 2/6. Its pathway is isoprenoid biosynthesis; isopentenyl diphosphate biosynthesis via DXP pathway; isopentenyl diphosphate from 1-deoxy-D-xylulose 5-phosphate: step 4/6. Its function is as follows. Bifunctional enzyme that catalyzes the formation of 4-diphosphocytidyl-2-C-methyl-D-erythritol from CTP and 2-C-methyl-D-erythritol 4-phosphate (MEP) (IspD), and catalyzes the conversion of 4-diphosphocytidyl-2-C-methyl-D-erythritol 2-phosphate (CDP-ME2P) to 2-C-methyl-D-erythritol 2,4-cyclodiphosphate (ME-CPP) with a corresponding release of cytidine 5-monophosphate (CMP) (IspF). The polypeptide is Bifunctional enzyme IspD/IspF (Ruegeria pomeroyi (strain ATCC 700808 / DSM 15171 / DSS-3) (Silicibacter pomeroyi)).